The chain runs to 475 residues: Ribulose bisphosphate carboxylase large chain (475 aa).

Residues 1–2 (MS) constitute a propeptide that is removed on maturation. An N-acetylproline modification is found at proline 3. Lysine 14 is subject to N6,N6,N6-trimethyllysine. 2 residues coordinate substrate: asparagine 123 and threonine 173. Lysine 175 serves as the catalytic Proton acceptor. Residue lysine 177 coordinates substrate. Positions 201, 203, and 204 each coordinate Mg(2+). Lysine 201 is subject to N6-carboxylysine. Histidine 294 (proton acceptor) is an active-site residue. Residues arginine 295, histidine 327, and serine 379 each coordinate substrate.

This sequence belongs to the RuBisCO large chain family. Type I subfamily. In terms of assembly, heterohexadecamer of 8 large chains and 8 small chains; disulfide-linked. The disulfide link is formed within the large subunit homodimers. Requires Mg(2+) as cofactor. Post-translationally, the disulfide bond which can form in the large chain dimeric partners within the hexadecamer appears to be associated with oxidative stress and protein turnover.

The protein resides in the plastid. It localises to the chloroplast. The catalysed reaction is 2 (2R)-3-phosphoglycerate + 2 H(+) = D-ribulose 1,5-bisphosphate + CO2 + H2O. It catalyses the reaction D-ribulose 1,5-bisphosphate + O2 = 2-phosphoglycolate + (2R)-3-phosphoglycerate + 2 H(+). Its function is as follows. RuBisCO catalyzes two reactions: the carboxylation of D-ribulose 1,5-bisphosphate, the primary event in carbon dioxide fixation, as well as the oxidative fragmentation of the pentose substrate in the photorespiration process. Both reactions occur simultaneously and in competition at the same active site. The chain is Ribulose bisphosphate carboxylase large chain from Anthoceros angustus (Hornwort).